We begin with the raw amino-acid sequence, 34 residues long: Histone H1, sperm (34 aa).

Positions 1-34 (PASPQKRAASPRRSPKKSPRKSPKKSPRKRSASP) are disordered. The segment covering 9 to 34 (ASPRRSPKKSPRKSPKKSPRKRSASP) has biased composition (basic residues).

Belongs to the histone H1/H5 family. As to expression, sperm.

Its subcellular location is the nucleus. It localises to the chromosome. Its function is as follows. Histones H1 are necessary for the condensation of nucleosome chains into higher-order structures. This Strongylocentrotus purpuratus (Purple sea urchin) protein is Histone H1, sperm.